The primary structure comprises 573 residues: FACT complex subunit pob3 (573 aa).

Disordered stretches follow at residues 153-174 and 485-573; these read SDGD…KAAA and LDND…KIGK. A compositionally biased stretch (acidic residues) spans 486 to 495; the sequence is DNDDMMSSDE. The span at 496 to 505 shows a compositional bias: basic and acidic residues; it reads DGGRADRGSA. Composition is skewed to acidic residues over residues 506–530 and 541–562; these read DEDE…EFDS and AEMD…SEEE.

Belongs to the SSRP1 family. Forms a stable heterodimer with spt16. The spt16-pob3 dimer weakly associates with multiple molecules of nhp6 to form the FACT complex.

The protein resides in the nucleus. Its subcellular location is the chromosome. Component of the FACT complex, a general chromatin factor that acts to reorganize nucleosomes. The FACT complex is involved in multiple processes that require DNA as a template such as mRNA elongation, DNA replication and DNA repair. During transcription elongation the FACT complex acts as a histone chaperone that both destabilizes and restores nucleosomal structure. It facilitates the passage of RNA polymerase II and transcription by promoting the dissociation of one histone H2A-H2B dimer from the nucleosome, then subsequently promotes the reestablishment of the nucleosome following the passage of RNA polymerase II. This is FACT complex subunit pob3 (pob3) from Aspergillus fumigatus (strain ATCC MYA-4609 / CBS 101355 / FGSC A1100 / Af293) (Neosartorya fumigata).